The sequence spans 207 residues: Cilia- and flagella-associated protein 418 (207 aa).

The required for interaction with FAM161A stretch occupies residues 1–75 (MAEDLDELLD…LINEIFEEPH (75 aa)).

As to quaternary structure, interacts (via N-terminus) with FAM161A (via central region); the interaction is direct. In terms of tissue distribution, expressed in the retina (at protein level).

Its subcellular location is the cytoplasm. It is found in the photoreceptor inner segment. Functionally, may be involved in photoreceptor outer segment disk morphogenesis. This chain is Cilia- and flagella-associated protein 418 (CFAP418), found in Bos taurus (Bovine).